Here is a 40-residue protein sequence, read N- to C-terminus: U2-ctenitoxin-Pr1a (40 aa).

4 cysteine pairs are disulfide-bonded: Cys-2/Cys-17, Cys-9/Cys-22, Cys-16/Cys-32, and Cys-24/Cys-30.

In terms of tissue distribution, expressed by the venom gland.

The protein localises to the secreted. Neurotoxin. This Phoneutria reidyi (Brazilian Amazonian armed spider) protein is U2-ctenitoxin-Pr1a.